The chain runs to 193 residues: uncharacterized protein (193 aa).

This is an uncharacterized protein from Saccharomyces cerevisiae (strain ATCC 204508 / S288c) (Baker's yeast).